Consider the following 84-residue polypeptide: Dolichol phosphate-mannose biosynthesis regulatory protein (84 aa).

Transmembrane regions (helical) follow at residues 11-31 (LGLV…VILL) and 49-69 (YAVA…GLFI).

Belongs to the DPM2 family. Component of the dolichol-phosphate mannose (DPM) synthase complex composed of DPM1, DPM2 and DPM3; in the complex interacts directly with DPM3. Component of the glycosylphosphatidylinositol-N-acetylglucosaminyltransferase (GPI-GnT) complex composed at least by PIGA, PIGC, PIGH, PIGP, PIGQ, PIGY and DPM2. Interacts with PIGA, PIGC and PIGQ.

Its subcellular location is the endoplasmic reticulum membrane. The protein operates within protein modification; protein glycosylation. In terms of biological role, regulates the biosynthesis of dolichol phosphate-mannose. Regulatory subunit of the dolichol-phosphate mannose (DPM) synthase complex; essential for the ER localization and stable expression of DPM1. Part of the glycosylphosphatidylinositol-N-acetylglucosaminyltransferase (GPI-GnT) complex that catalyzes the transfer of N-acetylglucosamine from UDP-N-acetylglucosamine to phosphatidylinositol and participates in the first step of GPI biosynthesis. May act by regulating the GPI-GNT complex. The protein is Dolichol phosphate-mannose biosynthesis regulatory protein of Homo sapiens (Human).